The chain runs to 144 residues: Small ribosomal subunit protein uS11c (144 aa).

It belongs to the universal ribosomal protein uS11 family. As to quaternary structure, part of the 30S ribosomal subunit.

It is found in the plastid. The protein resides in the chloroplast. The chain is Small ribosomal subunit protein uS11c from Oenothera biennis (German evening primrose).